The following is a 300-amino-acid chain: Protoheme IX farnesyltransferase (300 aa).

The next 9 membrane-spanning stretches (helical) occupy residues 21-43, 45-65, 94-114, 117-137, 145-167, 171-193, 213-233, 235-255, and 272-292; these read PRVV…RGVP, PLSV…AGAF, ASLI…LLFV, LSAL…SIVL, IVWG…TGSI, AIVL…SIHY, LVVL…LLLI, VAHM…WFVY, and AMHI…SVGI.

This sequence belongs to the UbiA prenyltransferase family. Protoheme IX farnesyltransferase subfamily.

The protein resides in the cell membrane. The catalysed reaction is heme b + (2E,6E)-farnesyl diphosphate + H2O = Fe(II)-heme o + diphosphate. It functions in the pathway porphyrin-containing compound metabolism; heme O biosynthesis; heme O from protoheme: step 1/1. In terms of biological role, converts heme B (protoheme IX) to heme O by substitution of the vinyl group on carbon 2 of heme B porphyrin ring with a hydroxyethyl farnesyl side group. The polypeptide is Protoheme IX farnesyltransferase (Tropheryma whipplei (strain TW08/27) (Whipple's bacillus)).